A 260-amino-acid chain; its full sequence is UPF0246 protein Cbei_1739 (260 aa).

The protein belongs to the UPF0246 family.

This is UPF0246 protein Cbei_1739 from Clostridium beijerinckii (strain ATCC 51743 / NCIMB 8052) (Clostridium acetobutylicum).